A 22-amino-acid polypeptide reads, in one-letter code: Cysteine-rich venom protein notescatin (22 aa).

Residues 1-15 are compositionally biased toward basic and acidic residues; sequence SNKKDYQKEIVDKHN. Positions 1–22 are disordered; the sequence is SNKKDYQKEIVDKHNALRRSVK.

It belongs to the CRISP family. Post-translationally, contains 8 disulfide bonds. Expressed by the venom gland.

Its subcellular location is the secreted. The chain is Cysteine-rich venom protein notescatin from Notechis scutatus scutatus (Mainland tiger snake).